A 185-amino-acid polypeptide reads, in one-letter code: HTH-type transcriptional regulator Hpr (185 aa).

The region spanning 13-157 (AMIFSQRIAQ…LIAILRNIYG (145 aa)) is the HTH marR-type domain. The segment at residues 63–86 (ISEIAKFGVMHVSTAFNFSKKLEE) is a DNA-binding region (H-T-H motif).

As to quaternary structure, homodimer.

Negative regulator of protease production and sporulation. The polypeptide is HTH-type transcriptional regulator Hpr (Bacillus cereus (strain G9842)).